The sequence spans 37 residues: Omega-conotoxin-like S6.7 (37 aa).

Residues 1–4 (KSTS) constitute a propeptide that is removed on maturation. Cystine bridges form between Cys5-Cys20, Cys12-Cys23, and Cys19-Cys32.

This sequence belongs to the conotoxin O1 superfamily. As to expression, expressed by the venom duct.

Its subcellular location is the secreted. In terms of biological role, omega-conotoxins act at presynaptic membranes, they bind and block voltage-gated calcium channels (Cav). This toxin blocks N-, P- and Q-type calcium channels. The sequence is that of Omega-conotoxin-like S6.7 from Conus striatus (Striated cone).